Reading from the N-terminus, the 574-residue chain is Lengsin (574 aa).

Disordered regions lie at residues 1 to 36 (MNDEGDLLQENTRDEGNETEASRMSKLRRTRKKVTK) and 66 to 131 (GNMS…IPTT). Over residues 11 to 23 (NTRDEGNETEASR) the composition is skewed to basic and acidic residues. Over residues 25 to 36 (SKLRRTRKKVTK) the composition is skewed to basic residues. The span at 91–131 (NQTTVIKPSPLKTSASAPCSEFNTNSNHADNTWEDTQIPTT) shows a compositional bias: polar residues. The region spanning 148-242 (NHLQFVRFEA…VICDTFTVTG (95 aa)) is the GS beta-grasp domain. The region spanning 249-574 (PRYIAKRQLS…ERNKFLEYFI (326 aa)) is the GS catalytic domain.

It belongs to the glutamine synthetase family. Dodecamer. Interacts with BFSP2 and VIM.

Functionally, may act as a component of the cytoskeleton or as a chaperone for the reorganization of intermediate filament proteins during terminal differentiation in the lens. Does not seem to have enzymatic activity. The protein is Lengsin (LGSN) of Canis lupus familiaris (Dog).